A 355-amino-acid chain; its full sequence is Zinc finger A20 and AN1 domain-containing stress-associated protein 3 (355 aa).

Residues 199 to 233 (AGQPVLCASGCGFYGNPATLDMCSVCYRQHCLLNG) form an A20-type zinc finger. The Zn(2+) site is built by C205, C209, C221, C224, C295, C298, C309, C311, C316, H319, H325, and C327. Residues 289–335 (KAPANRCASCKKKVGLLGFACRCGATYCGTHRYPEKHACGFDFKGAS) form an AN1-type zinc finger.

May be involved in environmental stress response. This is Zinc finger A20 and AN1 domain-containing stress-associated protein 3 (SAP3) from Oryza sativa subsp. japonica (Rice).